Here is a 475-residue protein sequence, read N- to C-terminus: Isocitrate dehydrogenase [NADP] (475 aa).

T104 is an NADP(+) binding site. D-threo-isocitrate is bound by residues S113, N115, R119, R129, and R153. Residue D362 coordinates Mg(2+). NADP(+)-binding positions include 394-400 (HGTAPKH), N407, Y446, and R450.

Belongs to the isocitrate and isopropylmalate dehydrogenases family. As to quaternary structure, homodimer. Mg(2+) serves as cofactor. Mn(2+) is required as a cofactor.

The protein localises to the cytoplasm. The catalysed reaction is D-threo-isocitrate + NADP(+) = 2-oxoglutarate + CO2 + NADPH. Its activity is regulated as follows. Inhibited non-competitively by ADP and 2-oxoglutarate, with respect to isocitrate and in a competitive manner by NADPH. Its function is as follows. Catalyzes the oxidative decarboxylation of isocitrate to 2-oxoglutarate and carbon dioxide with the concomitant reduction of NADP(+). Is specific for NADP(+), cannot use NAD(+). This chain is Isocitrate dehydrogenase [NADP], found in Synechocystis sp. (strain ATCC 27184 / PCC 6803 / Kazusa).